A 141-amino-acid chain; its full sequence is Hemoglobin subunit alpha (141 aa).

The Globin domain maps to 1 to 141 (VLSPADKTNV…VSTVLTSKYR (141 aa)). Ser-3 carries the phosphoserine modification. Lys-7 is modified (N6-succinyllysine). Thr-8 carries the post-translational modification Phosphothreonine. An N6-succinyllysine modification is found at Lys-11. Lys-16 carries the N6-acetyllysine; alternate modification. Residue Lys-16 is modified to N6-succinyllysine; alternate. Residue Tyr-24 is modified to Phosphotyrosine. Lys-40 is modified (N6-succinyllysine). A Phosphoserine modification is found at Ser-49. Residue His-58 participates in O2 binding. Position 87 (His-87) interacts with heme b. Ser-102 carries the phosphoserine modification. The residue at position 108 (Thr-108) is a Phosphothreonine. A Phosphoserine modification is found at Ser-124. Residues Thr-134 and Thr-137 each carry the phosphothreonine modification. Ser-138 is subject to Phosphoserine.

Belongs to the globin family. As to quaternary structure, heterotetramer of two alpha chains and two beta chains. Red blood cells.

Functionally, involved in oxygen transport from the lung to the various peripheral tissues. Hemopressin acts as an antagonist peptide of the cannabinoid receptor CNR1. Hemopressin-binding efficiently blocks cannabinoid receptor CNR1 and subsequent signaling. This chain is Hemoglobin subunit alpha (HBA), found in Phoca vitulina (Harbor seal).